The following is a 289-amino-acid chain: Diaminopimelate epimerase (289 aa).

3 residues coordinate substrate: N17, Q47, and N67. C76 functions as the Proton donor in the catalytic mechanism. Substrate contacts are provided by residues 77 to 78 (GN), N164, N198, and 216 to 217 (ER). The Proton acceptor role is filled by C225. 226–227 (GS) lines the substrate pocket.

The protein belongs to the diaminopimelate epimerase family. In terms of assembly, homodimer.

Its subcellular location is the cytoplasm. The enzyme catalyses (2S,6S)-2,6-diaminopimelate = meso-2,6-diaminopimelate. It functions in the pathway amino-acid biosynthesis; L-lysine biosynthesis via DAP pathway; DL-2,6-diaminopimelate from LL-2,6-diaminopimelate: step 1/1. Catalyzes the stereoinversion of LL-2,6-diaminopimelate (L,L-DAP) to meso-diaminopimelate (meso-DAP), a precursor of L-lysine and an essential component of the bacterial peptidoglycan. The polypeptide is Diaminopimelate epimerase (Bradyrhizobium sp. (strain BTAi1 / ATCC BAA-1182)).